A 657-amino-acid polypeptide reads, in one-letter code: MASAGKPNIDDGRRGTSSPKLKGRDHAKDTLCRNVTIYGRCRYEDKGCVFNHDPSRVNDAQHPERSSSKKRFNVDSPSFTPSATPLNGSSGLKKSATISPKAANAAPFLPKGVLSRSNAATPQSQPETSTPEWSIGEIQDFVPQGFDTSHVESIHGHGNGVLSTPAYDPFVSSSTPLGASGAVTHQVQPNPYSHDPSAIGGAAFFGAHNAFQQPVQYHLYAPIGPHNQNILGYQRNIHDLFLPNSFREELQKKAAATLQTLPNSQLPTQIDYFHSLVPLDLSHQKNAAIFGYPSWVYKAQSSKDGNFYALRRLEGFRLTNEKAIRSVQNWKRVSCGSVVTVHDAFTNRSFQDSSLIFVTDYHPLSKTLAEQHLADGQGRYQGRHTSGHIPEQILWSYVTQIANALKAIHSAGLAARVIEPSKILLTGKNRIRLNACGILDVVQFDSQRPLADLQHQDLVNFGQLILTLGANSPSLMHNPTKATEHFNRSYSAQLNNSVYWLLSGMQKDQERTIDIFISGISSQLMSTFDSSLHLDDQLISDLSRELENARLVRLLTKLNFINERPEYEHDRQWSENGERYFLKLFRDYVFHQVDAQNAPVVDLGHVLTCLNKLDAGTDEKVTLISRDEQSCFIVSYKELKKAVEASFQALLKPARRI.

3 disordered regions span residues M1 to D29, H52 to I98, and S115 to I135. A C3H1-type zinc finger spans residues A27–S55. The span at H52–S67 shows a compositional bias: basic and acidic residues. 2 stretches are compositionally biased toward polar residues: residues D75–I98 and S115–E132. The pseudokinase domain stretch occupies residues Q259–S521. ATP contacts are provided by residues R311, D360–T367, and S421–K422. Residues S522–F560 are a coiled coil. Residues I561–I657 form a knob domain region.

The protein belongs to the protein kinase superfamily. PAN3 family. As to quaternary structure, homodimer. Forms a heterotrimer with a catalytic subunit PAN2 to form the poly(A)-nuclease (PAN) deadenylation complex. Interacts (via PAM-2 motif) with poly(A)-binding protein PAB1 (via PABC domain), conferring substrate specificity of the enzyme complex.

Its subcellular location is the cytoplasm. Functionally, regulatory subunit of the poly(A)-nuclease (PAN) deadenylation complex, one of two cytoplasmic mRNA deadenylases involved in mRNA turnover. PAN specifically shortens poly(A) tails of RNA and the activity is stimulated by poly(A)-binding protein PAB1. PAN deadenylation is followed by rapid degradation of the shortened mRNA tails by the CCR4-NOT complex. Deadenylated mRNAs are then degraded by two alternative mechanisms, namely exosome-mediated 3'-5' exonucleolytic degradation, or deadenylation-dependent mRNA decaping and subsequent 5'-3' exonucleolytic degradation by XRN1. May also be involved in post-transcriptional maturation of mRNA poly(A) tails. PAN3 acts as a positive regulator for PAN activity, recruiting the catalytic subunit PAN2 to mRNA via its interaction with RNA and with PAB1. This chain is PAN2-PAN3 deadenylation complex subunit PAN3, found in Coccidioides immitis (strain RS) (Valley fever fungus).